A 92-amino-acid polypeptide reads, in one-letter code: Small ribosomal subunit protein uS19 (92 aa).

It belongs to the universal ribosomal protein uS19 family.

In terms of biological role, protein S19 forms a complex with S13 that binds strongly to the 16S ribosomal RNA. The polypeptide is Small ribosomal subunit protein uS19 (Shewanella halifaxensis (strain HAW-EB4)).